Here is a 327-residue protein sequence, read N- to C-terminus: GMP reductase (327 aa).

The active-site Thioimidate intermediate is C176. 205 to 228 (IIADGGIRTHGDIAKSIRFGATMV) is an NADP(+) binding site.

It belongs to the IMPDH/GMPR family. GuaC type 2 subfamily.

The enzyme catalyses IMP + NH4(+) + NADP(+) = GMP + NADPH + 2 H(+). Functionally, catalyzes the irreversible NADPH-dependent deamination of GMP to IMP. It functions in the conversion of nucleobase, nucleoside and nucleotide derivatives of G to A nucleotides, and in maintaining the intracellular balance of A and G nucleotides. This is GMP reductase from Streptococcus equi subsp. equi (strain 4047).